Consider the following 402-residue polypeptide: Olfactomedin-like protein 1 (402 aa).

The signal sequence occupies residues Met-1–Asp-28. N-linked (GlcNAc...) asparagine glycosylation occurs at Asn-66. Residues Ser-79 to Ile-133 adopt a coiled-coil conformation. Residues Asn-138 and Asn-183 are each glycosylated (N-linked (GlcNAc...) asparagine). Residues Ser-140–Arg-397 enclose the Olfactomedin-like domain. Cys-141 and Cys-324 form a disulfide bridge.

In terms of processing, highly N-glycosylated. In terms of tissue distribution, mainly expressed in the small intestine, liver, lung and heart.

It is found in the secreted. The sequence is that of Olfactomedin-like protein 1 (OLFML1) from Homo sapiens (Human).